The primary structure comprises 419 residues: Elongation factor Tu, chloroplastic (419 aa).

One can recognise a tr-type G domain in the interval 10 to 214 (KPHVNIGTIG…AVDSYIPTPK (205 aa)). Positions 19–26 (GHVDHGKT) are G1. Residue 19–26 (GHVDHGKT) participates in GTP binding. Threonine 26 contributes to the Mg(2+) binding site. The G2 stretch occupies residues 60 to 64 (GITIN). The G3 stretch occupies residues 81–84 (DCPG). Residues 81–85 (DCPGH) and 136–139 (NKED) contribute to the GTP site. The G4 stretch occupies residues 136 to 139 (NKED). The interval 174–176 (SAL) is G5.

It belongs to the TRAFAC class translation factor GTPase superfamily. Classic translation factor GTPase family. EF-Tu/EF-1A subfamily.

It is found in the plastid. Its subcellular location is the chloroplast. The catalysed reaction is GTP + H2O = GDP + phosphate + H(+). Its function is as follows. GTP hydrolase that promotes the GTP-dependent binding of aminoacyl-tRNA to the A-site of ribosomes during protein biosynthesis. The chain is Elongation factor Tu, chloroplastic (tufA) from Chara vulgaris (Common stonewort).